Here is a 253-residue protein sequence, read N- to C-terminus: Ethylene-responsive transcription factor RAP2-11 (253 aa).

A DNA-binding region (AP2/ERF) is located at residues 21 to 78; it reads KFVGVRQRPSGKWVAEIKDTTQKIRMWLGTFETAEEAARAYDEAACLLRGSNTRTNFA.

It belongs to the AP2/ERF transcription factor family. ERF subfamily.

It localises to the nucleus. Its function is as follows. Probably acts as a transcriptional activator. Binds to the GCC-box pathogenesis-related promoter element. May be involved in the regulation of gene expression by stress factors and by components of stress signal transduction pathways. This chain is Ethylene-responsive transcription factor RAP2-11 (RAP2-11), found in Arabidopsis thaliana (Mouse-ear cress).